A 79-amino-acid chain; its full sequence is Putative antitoxin VapB12 (79 aa).

This sequence belongs to the UPF0330 family.

Possibly the antitoxin component of a type II toxin-antitoxin (TA) system. Its cognate toxin is VapC12 (Potential). The sequence is that of Putative antitoxin VapB12 (vapB12) from Sulfurisphaera tokodaii (strain DSM 16993 / JCM 10545 / NBRC 100140 / 7) (Sulfolobus tokodaii).